Consider the following 340-residue polypeptide: MSFIDEAKVYLKAGNGGNGCSSFRREKFIEFGGPDGGNGGNGGNIVFATSNHINTLLYFRYKQHIKAENGNPGSGKKKSGSSGKDIIIKVPIGTQLYDEDGILIADLSSENQKVIVAQGGKGGTGNANYKTSTNRAPRYFTLGEAGEEKYITLKLKIISDIGIIGLPNAGKSSFLASCTDSKTKIADYPFTTLEPHLGVAFIDNRELVLADIPGLIAGAHLGYGIGDKFLKHIERCSTLLHIIDCTLDDIIDSYECIRKELLLYNKELINKPEFIVLNKSDLLEKKEITKKKQLLSQYTKKEIFVSSIKDNRYAILSTLIQYIHKKNANAEPYIYDPFNI.

The region spanning 1–158 is the Obg domain; the sequence is MSFIDEAKVY…KYITLKLKII (158 aa). In terms of domain architecture, OBG-type G spans 159-325; sequence SDIGIIGLPN…LSTLIQYIHK (167 aa). Residues 165–172, 190–194, 211–214, 278–281, and 306–308 contribute to the GTP site; these read GLPNAGKS, FTTLE, DIPG, NKSD, and SSI. Ser172 and Thr192 together coordinate Mg(2+).

Belongs to the TRAFAC class OBG-HflX-like GTPase superfamily. OBG GTPase family. Monomer. It depends on Mg(2+) as a cofactor.

The protein localises to the cytoplasm. Functionally, an essential GTPase which binds GTP, GDP and possibly (p)ppGpp with moderate affinity, with high nucleotide exchange rates and a fairly low GTP hydrolysis rate. Plays a role in control of the cell cycle, stress response, ribosome biogenesis and in those bacteria that undergo differentiation, in morphogenesis control. The chain is GTPase Obg from Ehrlichia chaffeensis (strain ATCC CRL-10679 / Arkansas).